We begin with the raw amino-acid sequence, 262 residues long: Diphthine synthase (262 aa).

Residues Leu10, Asp87, Val90, 115–116 (SI), Leu166, Ala209, and His234 each bind S-adenosyl-L-methionine.

It belongs to the diphthine synthase family. As to quaternary structure, homodimer.

The catalysed reaction is 2-[(3S)-amino-3-carboxypropyl]-L-histidyl-[translation elongation factor 2] + 3 S-adenosyl-L-methionine = diphthine-[translation elongation factor 2] + 3 S-adenosyl-L-homocysteine + 3 H(+). The protein operates within protein modification; peptidyl-diphthamide biosynthesis. In terms of biological role, S-adenosyl-L-methionine-dependent methyltransferase that catalyzes the trimethylation of the amino group of the modified target histidine residue in translation elongation factor 2 (EF-2), to form an intermediate called diphthine. The three successive methylation reactions represent the second step of diphthamide biosynthesis. The chain is Diphthine synthase from Pyrococcus abyssi (strain GE5 / Orsay).